Reading from the N-terminus, the 156-residue chain is Putative pre-16S rRNA nuclease (156 aa).

It belongs to the YqgF nuclease family.

Its subcellular location is the cytoplasm. In terms of biological role, could be a nuclease involved in processing of the 5'-end of pre-16S rRNA. This Rickettsia typhi (strain ATCC VR-144 / Wilmington) protein is Putative pre-16S rRNA nuclease.